Consider the following 183-residue polypeptide: Peptide deformylase (183 aa).

Fe cation-binding residues include cysteine 110 and histidine 153. Glutamate 154 is a catalytic residue. A Fe cation-binding site is contributed by histidine 157.

Belongs to the polypeptide deformylase family. It depends on Fe(2+) as a cofactor.

The enzyme catalyses N-terminal N-formyl-L-methionyl-[peptide] + H2O = N-terminal L-methionyl-[peptide] + formate. In terms of biological role, removes the formyl group from the N-terminal Met of newly synthesized proteins. Requires at least a dipeptide for an efficient rate of reaction. N-terminal L-methionine is a prerequisite for activity but the enzyme has broad specificity at other positions. This chain is Peptide deformylase, found in Listeria monocytogenes serovar 1/2a (strain ATCC BAA-679 / EGD-e).